Here is a 327-residue protein sequence, read N- to C-terminus: tRNA uridine(34) hydroxylase (327 aa).

The region spanning 122–218 (QENRCLVLDV…YGLKMGTGKW (97 aa)) is the Rhodanese domain. Cys-178 serves as the catalytic Cysteine persulfide intermediate.

Belongs to the TrhO family.

The catalysed reaction is uridine(34) in tRNA + AH2 + O2 = 5-hydroxyuridine(34) in tRNA + A + H2O. Functionally, catalyzes oxygen-dependent 5-hydroxyuridine (ho5U) modification at position 34 in tRNAs. The protein is tRNA uridine(34) hydroxylase of Chlamydia trachomatis serovar A (strain ATCC VR-571B / DSM 19440 / HAR-13).